We begin with the raw amino-acid sequence, 482 residues long: tRNA sulfurtransferase (482 aa).

In terms of domain architecture, THUMP spans 58 to 160 (VEALQELSRV…GNKAYLYSNV (103 aa)). ATP contacts are provided by residues 178-179 (LF), 203-204 (HY), Arg-260, Gly-282, and Gln-291. An intrachain disulfide couples Cys-341 to Cys-444. The region spanning 400–482 (IPGDSIIIDV…RYRAGLEKTR (83 aa)) is the Rhodanese domain. Cys-444 acts as the Cysteine persulfide intermediate in catalysis.

The protein belongs to the ThiI family.

The protein localises to the cytoplasm. It catalyses the reaction [ThiI sulfur-carrier protein]-S-sulfanyl-L-cysteine + a uridine in tRNA + 2 reduced [2Fe-2S]-[ferredoxin] + ATP + H(+) = [ThiI sulfur-carrier protein]-L-cysteine + a 4-thiouridine in tRNA + 2 oxidized [2Fe-2S]-[ferredoxin] + AMP + diphosphate. The catalysed reaction is [ThiS sulfur-carrier protein]-C-terminal Gly-Gly-AMP + S-sulfanyl-L-cysteinyl-[cysteine desulfurase] + AH2 = [ThiS sulfur-carrier protein]-C-terminal-Gly-aminoethanethioate + L-cysteinyl-[cysteine desulfurase] + A + AMP + 2 H(+). The protein operates within cofactor biosynthesis; thiamine diphosphate biosynthesis. Catalyzes the ATP-dependent transfer of a sulfur to tRNA to produce 4-thiouridine in position 8 of tRNAs, which functions as a near-UV photosensor. Also catalyzes the transfer of sulfur to the sulfur carrier protein ThiS, forming ThiS-thiocarboxylate. This is a step in the synthesis of thiazole, in the thiamine biosynthesis pathway. The sulfur is donated as persulfide by IscS. This chain is tRNA sulfurtransferase, found in Desulfurococcus amylolyticus (strain DSM 18924 / JCM 16383 / VKM B-2413 / 1221n) (Desulfurococcus kamchatkensis).